The sequence spans 379 residues: MGKYIRPLSDAVFTIASDDLWIESLAIQQLHTTANLPNMQRVVGMPDLHPGRGYPIGAAFFSVGRFYPALVGNDIGCGMALWQTDILARKYNADKFEKRLSDLDDVAEESWLEENLPSAFAQHPWRNSLGSIGGGNHFVELQQIDQIIDAELFALAGLDAQHLQLLVHSGSRGLGQSILQRHIASFSHHGLPEGSDDALRYIAEHDDALAFARINRQLIALRIMQQVKATGSPVLDVAHNFVSACQIGDQQGWLHRKGATPDDNGLVIIPGSRGDYSWLVKPVANEKTLHSLAHGAGRKWGRTECKGRLAAKYTATQLSRTELGSRVICRDKQLIFEEAPQAYKSAESVVQCLVLAGLIIPVARLRPVLTLKNSGGKKG.

5 residues coordinate Mn(2+): aspartate 74, cysteine 77, histidine 137, histidine 168, and histidine 239. GMP is bound at residue 136–140; that stretch reads NHFVE. GMP-binding positions include 239–240, serine 277, 294–297, and lysine 372; these read HN and HGAG. The active-site GMP-histidine intermediate is histidine 294.

It belongs to the RtcB family. RtcB2 subfamily. The cofactor is Mn(2+).

It catalyses the reaction a 3'-end 3'-phospho-ribonucleotide-RNA + a 5'-end dephospho-ribonucleoside-RNA + GTP = a ribonucleotidyl-ribonucleotide-RNA + GMP + diphosphate. Its function is as follows. GTP-dependent RNA ligase involved in rRNA repair. Repairs damaged 16S rRNA in 30S subunits that has been cleaved between adenine-1493 and guanosine-1494 (E.coli nubering). This specific cleavage is inflicted by CdiA (ECL_04451) or by colicin E3-type (ColE3) proteins. Poorly repairs damaged rRNA in the 70S ribosome; addition of release factor PrfH improves repair about 3-fold in vitro, probably because PrfH hydrolyzes the nascent chain allowing ribosomal subunit dissociation. In vivo the PrfH-RtcB2 pair restores growth in the presence of ribotoxins that specifically create this damage. Does not repair damaged tRNA (tested with tRNA(Asp) and tRNA(Arg)). This Escherichia coli (strain ATCC 25922 / DSM 1103 / LMG 8223 / NCIMB 12210 / NCTC 12241 / WDCM 00013 / Seattle 1946) protein is RNA-splicing ligase RtcB2.